The sequence spans 449 residues: Probable D-serine dehydratase (449 aa).

At Lys119 the chain carries N6-(pyridoxal phosphate)lysine.

It belongs to the serine/threonine dehydratase family. DsdA subfamily. It depends on pyridoxal 5'-phosphate as a cofactor.

The enzyme catalyses D-serine = pyruvate + NH4(+). This is Probable D-serine dehydratase from Pseudomonas putida (strain ATCC 700007 / DSM 6899 / JCM 31910 / BCRC 17059 / LMG 24140 / F1).